Reading from the N-terminus, the 500-residue chain is NAD(P)H-quinone oxidoreductase chain 4, chloroplastic (500 aa).

Transmembrane regions (helical) follow at residues 3–23 (FFPWLTIIVILPIFAGSIILF), 37–57 (ICICILELLLTTYAFCYHFQL), 87–107 (IGPILLTGFITTLATLAAWPV), 113–130 (LFHFLMLAMYSGQIGLFA), 134–154 (LLLFFIMWELELIPVYLLLSM), 167–187 (FILYTAGGSVFLLMGVLGVGL), 208–228 (ALEIILYIGFFIAFAVKSPII), 242–262 (HYSTCMLLAGILLKMGAYGLI), 272–292 (AHSIFSPWLVIVGTIQIIYAA), 305–325 (IAYSSVSHMGFILIGIGSIND), 330–350 (GAILQIVSHGFIGAALFFLAG), 364–384 (MGGIAIPMPKIFTMFSSFSMA), 386–406 (LALPGMSGFVAEFIVFFGIIT), 411–431 (LLISKLGITFVMAIGIILTPI), and 462–482 (LFVSIAIFIPVIGIGMYPDFV).

This sequence belongs to the complex I subunit 4 family.

Its subcellular location is the plastid. It localises to the chloroplast thylakoid membrane. The enzyme catalyses a plastoquinone + NADH + (n+1) H(+)(in) = a plastoquinol + NAD(+) + n H(+)(out). It carries out the reaction a plastoquinone + NADPH + (n+1) H(+)(in) = a plastoquinol + NADP(+) + n H(+)(out). The chain is NAD(P)H-quinone oxidoreductase chain 4, chloroplastic from Daucus carota (Wild carrot).